Here is a 130-residue protein sequence, read N- to C-terminus: Mitochondrial import protein 1 (130 aa).

Residues 1 to 41 are disordered; that stretch reads MSAEEISNPLAESGVTISSDSEQYSAPESASPQSPSSSSPA. Polar residues predominate over residues 15 to 24; that stretch reads VTISSDSEQY. A compositionally biased stretch (low complexity) spans 25–41; sequence SAPESASPQSPSSSSPA.

Belongs to the MIM1 family.

It is found in the mitochondrion outer membrane. Required for the assembly of the TOM (translocase of outer membrane) receptor complex, which is responsible for the recognition and translocation of cytosolically synthesized mitochondrial preproteins. The protein is Mitochondrial import protein 1 of Neurospora crassa (strain ATCC 24698 / 74-OR23-1A / CBS 708.71 / DSM 1257 / FGSC 987).